A 593-amino-acid polypeptide reads, in one-letter code: V-type sodium ATPase catalytic subunit A (593 aa).

232-239 (GPFGAGKT) is a binding site for ATP.

Belongs to the ATPase alpha/beta chains family.

It carries out the reaction 4 Na(+)(in) + ATP + H2O = 4 Na(+)(out) + ADP + phosphate + H(+). Its function is as follows. Involved in ATP-driven sodium extrusion. This is V-type sodium ATPase catalytic subunit A (ntpA) from Enterococcus hirae (strain ATCC 9790 / DSM 20160 / JCM 8729 / LMG 6399 / NBRC 3181 / NCIMB 6459 / NCDO 1258 / NCTC 12367 / WDCM 00089 / R).